The following is a 1530-amino-acid chain: Glutamate-rich protein 3 (1530 aa).

9 disordered regions span residues 165 to 187, 408 to 429, 475 to 661, 673 to 724, 773 to 870, 923 to 1146, 1167 to 1334, 1360 to 1383, and 1425 to 1530; these read RLQP…RSRS, SLPK…KAEG, MTSK…PMPI, TEKG…GLEE, EAME…AVGL, REAA…LLGE, LENI…GMGG, LAGS…DVAE, and YTTE…NVQV. Basic and acidic residues-rich tracts occupy residues 415–429, 531–545, and 552–562; these read EKST…KAEG, LDDK…KESE, and PDARDNVKDEN. Residues 563–574 are compositionally biased toward acidic residues; sequence DGCSESELEEDK. A compositionally biased stretch (low complexity) spans 581–592; sequence SSTSSRSHPYSS. The span at 600 to 616 shows a compositional bias: basic and acidic residues; it reads VGDREAHTDSSTDESAR. Residues 638-647 are compositionally biased toward acidic residues; it reads ESLEIEIEDQ. Basic and acidic residues-rich tracts occupy residues 684–717 and 773–787; these read LSEK…DKKA and EAME…RDAD. The segment covering 834 to 845 has biased composition (low complexity); the sequence is GIERGAEGAAEA. Acidic residues predominate over residues 943 to 958; sequence GESEEEASIDLEDTGP. Basic and acidic residues-rich tracts occupy residues 979-992, 1039-1116, and 1173-1212; these read EPAK…RTET, EANR…EETK, and LRKE…RQDG. Over residues 1213 to 1225 the composition is skewed to low complexity; that stretch reads EGALAAPEAEPAG. Residues 1289-1300 are compositionally biased toward acidic residues; the sequence is AVDEDPEEEEDK. Composition is skewed to basic and acidic residues over residues 1464 to 1487 and 1502 to 1511; these read GRQE…RELS and DFTETREKQQ. Positions 1517–1530 are enriched in polar residues; the sequence is ESETADVSPNNVQV.

As to quaternary structure, interacts with CLTC/clathrin heavy chain 1, AP2A2/AP-2 complex subunit alpha-2, and PIK3C2A/phosphatidylinositol 4-phosphate 3-kinase C2 domain-containing subunit alpha. In terms of tissue distribution, expressed in dopaminergic and serotoninergic neurons.

It localises to the cell projection. The protein localises to the cilium. It is found in the cytoplasm. Functionally, component of the primary cilium that controls cilium formation and length. May function within retrograde intraflagellar transport (IFT)-associated pathways to remove signaling proteins from primary cilia. Also involved in neuronal vesicle biogenesis and neurotransmitter vesicular function. The sequence is that of Glutamate-rich protein 3 from Homo sapiens (Human).